Consider the following 276-residue polypeptide: Rhomboid protease GlpG (276 aa).

6 helical membrane-spanning segments follow: residues 94-114, 142-162, 169-189, 192-212, 229-249, and 252-272; these read GPFT…QNLL, AFMH…WYLG, IGSG…GFVQ, FSGP…GYVW, LILF…GMAI, and GAHV…TLHG. Residue Ser201 is the Nucleophile of the active site. The active site involves His254.

Belongs to the peptidase S54 family.

The protein localises to the cell inner membrane. The catalysed reaction is Cleaves type-1 transmembrane domains using a catalytic dyad composed of serine and histidine that are contributed by different transmembrane domains.. Functionally, rhomboid-type serine protease that catalyzes intramembrane proteolysis. This Klebsiella pneumoniae subsp. pneumoniae (strain ATCC 700721 / MGH 78578) protein is Rhomboid protease GlpG.